The primary structure comprises 686 residues: MPASSVRLPLRLLTLAGLLALAGAAALARGAPQGGPPSPQGGPAPTAAPARGPTLFVLVGDGSARFVFQLGGLGALNDTRIRGHLLGRYLVSYQVVPPPVSAWYFVQRPRERPRLSGPPSGAELVAFDAPGVRRTYTTAAVWPAEVAVLADAEARCPAAVFNVTLGEAFLGLRVALRSFLPLEVIISAERMRMIAPPALGADLEPPGPPAGRFHVYTLGFLSDGAMHQTMRDVAAYVHESDDYLAQLSAAHAAALAAVVQPGPYYFYRAAVRLGVAAFVFSEAARRDRRASAPALLRVESDARLLSRLLMRAAGCPAGFAGLFDGRAERVPVAPADQLRAAWTFGEDPAPRLDLARATVAEAYRRSVRGKPFDQQALFFAVALLLRAGGPGDARETLLRTTAMCTAERAAAAAELTRAALSPTAAWNEPFSLLDVLSPCAVSLRRDLGGDATLANLGAAARLALAPAGAPGAAAATDGGAEEEEEDPVARAAPEIPAEALLALPLRGGASFVFTRRRPDCGPAYTLGGVDIANPLVLALVSNDSAACDYTDRMPESQHLPATDNPSVCVYCDCVFVRYSSAGTILETVLIESKDMEEQLMAGANSTIPSFNPTLHGGDVKALMLFPNGTVVDLLSFTSTRLAPVSPAYVVASVVGAAITVGILYALFKMLCSFSSEGYSRLINARS.

The first 24 residues, 1-24 (MPASSVRLPLRLLTLAGLLALAGA), serve as a signal peptide directing secretion. The Virion surface segment spans residues 25-646 (AALARGAPQG…TSTRLAPVSP (622 aa)). Residues asparagine 77, asparagine 162, asparagine 542, asparagine 604, and asparagine 627 are each glycosylated (N-linked (GlcNAc...) asparagine; by host). The segment at 157-217 (PAAVFNVTLG…PPAGRFHVYT (61 aa)) is interaction with gL. The chain crosses the membrane as a helical span at residues 647-667 (AYVVASVVGAAITVGILYALF). Residues 668–686 (KMLCSFSSEGYSRLINARS) lie on the Intravirion side of the membrane.

It belongs to the herpesviridae glycoprotein H family. In terms of assembly, interacts with glycoprotein L (gL); this interaction is necessary for the correct processing and cell surface expression of gH. The heterodimer gH/gL seems to interact with gB trimers during fusion. Post-translationally, N-glycosylated, O-glycosylated, and sialylated.

The protein localises to the virion membrane. It localises to the host cell membrane. It is found in the host endosome membrane. Its function is as follows. The heterodimer glycoprotein H-glycoprotein L is required for the fusion of viral and plasma membranes leading to virus entry into the host cell. Following initial binding to host receptor, membrane fusion is mediated by the fusion machinery composed of gB and the heterodimer gH/gL. May also be involved in the fusion between the virion envelope and the outer nuclear membrane during virion morphogenesis. The chain is Envelope glycoprotein H from Sus scrofa (Pig).